The primary structure comprises 272 residues: Insulin-like growth factor-binding protein 1 (272 aa).

A signal peptide spans 1-25 (MPEFLTVVSWPFLILLSFQIGVAAG). The region spanning 28-109 (QPWHCAPCTA…TRGQGACVPE (82 aa)) is the IGFBP N-terminal domain. Intrachain disulfides connect Cys32/Cys59, Cys35/Cys61, Cys43/Cys62, Cys50/Cys65, Cys73/Cys86, and Cys80/Cys106. 3 positions are modified to phosphoserine: Ser139, Ser157, and Ser169. Thr170 bears the Phosphothreonine mark. The residue at position 171 (Tyr171) is a Phosphotyrosine. A Thyroglobulin type-1 domain is found at 186–264 (KEPCQRELYK…SLETRGDPNC (79 aa)). Disulfide bonds link Cys189–Cys219, Cys230–Cys241, and Cys243–Cys264. At Ser255 the chain carries Phosphoserine. A Cell attachment site motif is present at residues 259–261 (RGD).

Binds equally well IGF1 and IGF2. Interacts with integrin ITGA5:ITGB1. Interacts with VHL; this interaction inhibits HIF1A degradation.

It is found in the secreted. Multifunctional protein that plays a critical role in regulating the availability of IGFs such as IGF1 and IGF2 to their receptors and thereby regulates IGF-mediated cellular processes including cell migration, proliferation, differentiation or apoptosis in a cell-type specific manner. Also plays a positive role in cell migration by interacting with integrin ITGA5:ITGB1 through its RGD motif. Mechanistically, binding to integrins leads to activation of focal adhesion kinase/PTK2 and stimulation of the mitogen-activated protein kinase (MAPK) pathway. Regulates cardiomyocyte apoptosis by suppressing HIF-1alpha/HIF1A ubiquitination and subsequent degradation. This is Insulin-like growth factor-binding protein 1 (Igfbp1) from Mus musculus (Mouse).